Here is a 267-residue protein sequence, read N- to C-terminus: Acetylglutamate kinase (267 aa).

Substrate-binding positions include Gly53 to Gly54, Arg75, and Asn167.

This sequence belongs to the acetylglutamate kinase family. ArgB subfamily.

It is found in the cytoplasm. It catalyses the reaction N-acetyl-L-glutamate + ATP = N-acetyl-L-glutamyl 5-phosphate + ADP. It participates in amino-acid biosynthesis; L-arginine biosynthesis; N(2)-acetyl-L-ornithine from L-glutamate: step 2/4. Functionally, catalyzes the ATP-dependent phosphorylation of N-acetyl-L-glutamate. This is Acetylglutamate kinase from Shewanella pealeana (strain ATCC 700345 / ANG-SQ1).